The following is a 307-amino-acid chain: tRNA pseudouridine synthase B (307 aa).

The Nucleophile role is filled by aspartate 38.

Belongs to the pseudouridine synthase TruB family. Type 1 subfamily.

The catalysed reaction is uridine(55) in tRNA = pseudouridine(55) in tRNA. Functionally, responsible for synthesis of pseudouridine from uracil-55 in the psi GC loop of transfer RNAs. In Bacillus cytotoxicus (strain DSM 22905 / CIP 110041 / 391-98 / NVH 391-98), this protein is tRNA pseudouridine synthase B.